A 490-amino-acid chain; its full sequence is Histone-lysine N-methyltransferase Smyd1 (490 aa).

The SET domain maps to 7-253 (ENVEVFTSEG…EGEELTVSYI (247 aa)). An S-adenosyl-L-methionine-binding site is contributed by 17–19 (KGR). Zn(2+)-binding residues include Cys-52, Cys-55, Cys-65, Cys-68, Cys-74, Cys-78, His-86, and Cys-90. Residues 52 to 90 (CHTCFKRQEKLHRCGQCKFAHYCDRTCQKDAWLNHKNEC) form an MYND-type zinc finger. S-adenosyl-L-methionine contacts are provided by residues His-135 and 205-206 (NH). Cys-208 lines the Zn(2+) pocket. 270–272 (YYF) provides a ligand contact to S-adenosyl-L-methionine. Zn(2+) contacts are provided by Cys-274, Cys-276, and Cys-279.

The protein belongs to the class V-like SAM-binding methyltransferase superfamily. As to quaternary structure, interacts with HDAC1, HDAC2 and HDAC3. Interacts (via MYND-type zinc finger) with NACA isoform skNAC. As to expression, expressed in cardiac and skeletal muscle, lymphocytes and thymus.

It is found in the cytoplasm. Its subcellular location is the nucleus. The enzyme catalyses L-lysyl(4)-[histone H3] + 3 S-adenosyl-L-methionine = N(6),N(6),N(6)-trimethyl-L-lysyl(4)-[histone H3] + 3 S-adenosyl-L-homocysteine + 3 H(+). In terms of biological role, methylates histone H3 at 'Lys-4' (H3K4me). Acts as a transcriptional repressor. Essential for cardiomyocyte differentiation and cardiac morphogenesis. The polypeptide is Histone-lysine N-methyltransferase Smyd1 (Smyd1) (Mus musculus (Mouse)).